Here is a 203-residue protein sequence, read N- to C-terminus: IQ domain-containing protein F3 (203 aa).

Residues 1-12 (MELDQDKKKETP) show a composition bias toward basic and acidic residues. A disordered region spans residues 1–111 (MELDQDKKKE…CETQEADRSE (111 aa)). Residues 13–82 (EETENVNEVQ…EADKAILERS (70 aa)) adopt a coiled-coil conformation. A compositionally biased stretch (acidic residues) spans 29 to 38 (DEETEAEAEE). Over residues 39-51 (ADKAILERSDSVK) the composition is skewed to basic and acidic residues. Positions 64–73 (DEETEAEAEE) are enriched in acidic residues. Composition is skewed to basic and acidic residues over residues 74–86 (ADKAILERSDSVK) and 96–111 (QIQEEKCETQEADRSE). The IQ domain occupies 129–158 (VMLAGVKIQAWWRGTLVRRTLLLAALNAWT).

This chain is IQ domain-containing protein F3 (Iqcf3), found in Mus musculus (Mouse).